The primary structure comprises 362 residues: Heme A synthase (362 aa).

Helical transmembrane passes span 10-30, 102-122, 128-148, 159-179, and 198-218; these read LAAI…MVLV, VIGM…AVSG, LWLI…MVAS, VRLA…VWTL, and AWGL…VAGL. His262 contributes to the heme binding site. Transmembrane regions (helical) follow at residues 266 to 286, 297 to 317, and 318 to 338; these read AYTL…AGAG, LAAI…VVPI, and SLAL…VLQA. Position 323 (His323) interacts with heme.

The protein belongs to the COX15/CtaA family. Type 2 subfamily. In terms of assembly, interacts with CtaB. The cofactor is heme b.

Its subcellular location is the cell membrane. It catalyses the reaction Fe(II)-heme o + 2 A + H2O = Fe(II)-heme a + 2 AH2. It functions in the pathway porphyrin-containing compound metabolism; heme A biosynthesis; heme A from heme O: step 1/1. Functionally, catalyzes the conversion of heme O to heme A by two successive hydroxylations of the methyl group at C8. The first hydroxylation forms heme I, the second hydroxylation results in an unstable dihydroxymethyl group, which spontaneously dehydrates, resulting in the formyl group of heme A. The sequence is that of Heme A synthase from Bradyrhizobium sp. (strain BTAi1 / ATCC BAA-1182).